A 129-amino-acid polypeptide reads, in one-letter code: Small ribosomal subunit protein uS11 (129 aa).

The protein belongs to the universal ribosomal protein uS11 family. Part of the 30S ribosomal subunit. Interacts with proteins S7 and S18. Binds to IF-3.

In terms of biological role, located on the platform of the 30S subunit, it bridges several disparate RNA helices of the 16S rRNA. Forms part of the Shine-Dalgarno cleft in the 70S ribosome. The polypeptide is Small ribosomal subunit protein uS11 (Francisella tularensis subsp. holarctica (strain FTNF002-00 / FTA)).